A 104-amino-acid chain; its full sequence is UPF0213 protein PA3854 (104 aa).

The GIY-YIG domain occupies 13–88; that stretch reads KCWSVYLVRA…KALSKRAKER (76 aa).

The protein belongs to the UPF0213 family.

The polypeptide is UPF0213 protein PA3854 (Pseudomonas aeruginosa (strain ATCC 15692 / DSM 22644 / CIP 104116 / JCM 14847 / LMG 12228 / 1C / PRS 101 / PAO1)).